A 251-amino-acid polypeptide reads, in one-letter code: Ubiquinone/menaquinone biosynthesis C-methyltransferase UbiE (251 aa).

Residues threonine 74, aspartate 95, 123 to 124 (NA), and serine 140 contribute to the S-adenosyl-L-methionine site.

It belongs to the class I-like SAM-binding methyltransferase superfamily. MenG/UbiE family.

The enzyme catalyses a 2-demethylmenaquinol + S-adenosyl-L-methionine = a menaquinol + S-adenosyl-L-homocysteine + H(+). It catalyses the reaction a 2-methoxy-6-(all-trans-polyprenyl)benzene-1,4-diol + S-adenosyl-L-methionine = a 5-methoxy-2-methyl-3-(all-trans-polyprenyl)benzene-1,4-diol + S-adenosyl-L-homocysteine + H(+). It participates in quinol/quinone metabolism; menaquinone biosynthesis; menaquinol from 1,4-dihydroxy-2-naphthoate: step 2/2. The protein operates within cofactor biosynthesis; ubiquinone biosynthesis. Methyltransferase required for the conversion of demethylmenaquinol (DMKH2) to menaquinol (MKH2) and the conversion of 2-polyprenyl-6-methoxy-1,4-benzoquinol (DDMQH2) to 2-polyprenyl-3-methyl-6-methoxy-1,4-benzoquinol (DMQH2). The polypeptide is Ubiquinone/menaquinone biosynthesis C-methyltransferase UbiE (Klebsiella pneumoniae subsp. pneumoniae (strain ATCC 700721 / MGH 78578)).